The chain runs to 256 residues: UPF0246 protein Maqu_2499 (256 aa).

Belongs to the UPF0246 family.

The sequence is that of UPF0246 protein Maqu_2499 from Marinobacter nauticus (strain ATCC 700491 / DSM 11845 / VT8) (Marinobacter aquaeolei).